A 361-amino-acid chain; its full sequence is MHRSSYCREETTLCQGVNSTWVPPADTVPEASLTPHSPPAPDSPAPSPKPGYGYSACEEKPGDPRIRRPMNAFMVWAKDERKRLAQQNPDLHNAVLSKMLGQSWKNLTSAEKRPFVEEAERLRVQHLQDHPNYKYRPRRKKQAKKLKRMDPSHHLRNEGYTGGQPMVNLSHFRELHPLGGSGELESYGLPTPEMSPLDVLEPSEPAFFPPHMREDPDPGLFRTYQHEMDFSQEKTLREISLPYSTSPSHMGSFLRTPTPSAFYYKPHGGSSARTPLGQLSPPPEAPALDAMDHLNHAELWGDFDLNEFDQYLNMSRTQGPGYSFPMSKLGGPRTIPCEENSLISALSDASTAMYYTPCITG.

Residues Val-17 to Arg-65 are disordered. Positions His-36–Lys-49 are enriched in pro residues. The HMG box DNA-binding region spans Ile-66–Lys-134. Interaction with DNA stretches follow at residues Arg-68–Arg-81 and His-92–Trp-104. The segment at Leu-127–Gly-163 is disordered. The segment covering Tyr-133 to Lys-147 has biased composition (basic residues). The important for transcriptional activation stretch occupies residues Lys-147 to Phe-208. Positions Arg-148 to Asn-157 are enriched in basic and acidic residues. A Sox C-terminal domain is found at Lys-234–Thr-360. Residues Asn-306–Met-314 carry the 9aaTAD motif.

In terms of tissue distribution, expressed in the adult spleen, lung, heart and kidney, and at a lower level in the adult testis, liver and brain.

It is found in the nucleus. In terms of biological role, transcription factor. Binds to the consensus DNA sequence 5'-AACAAT-3'. Also binds 5'-CACAAT-3' and 5'-AATAAT-3' but with a lower affinity. Acts partially redundantly with sox7 during cardiogenesis, acting indirectly through nodal-signaling to induce mesodermal, organizer and endodermal tissues, which then interact to initiate cardiogenesis. Also acts as an antagonist of beta-catenin signaling. The protein is Transcription factor Sox-18B (sox18-b) of Xenopus laevis (African clawed frog).